The primary structure comprises 297 residues: Developmental pluripotency-associated protein 4 (297 aa).

The tract at residues 1–77 (MEPSGSKKGR…KVPVPPFPQH (77 aa)) is disordered. Residues 23–34 (SSQPSTSSAKTK) show a composition bias toward low complexity. Positions 43-63 (SEKDDGCKPEEKSAQDPETPG) are enriched in basic and acidic residues. Serine 211 is subject to Phosphoserine.

As to quaternary structure, interacts with DPPA2. Interacts with PCGF1.

The protein resides in the nucleus. In terms of biological role, may be involved in the maintenance of active epigenetic status of target genes. May inhibit differentiation of embryonic stem (ES) cells into a primitive ectoderm lineage. The polypeptide is Developmental pluripotency-associated protein 4 (Dppa4) (Rattus norvegicus (Rat)).